The primary structure comprises 241 residues: Dolichol-phosphate mannosyltransferase subunit 1 (241 aa).

GDP-alpha-D-mannose contacts are provided by proline 13, tyrosine 15, glutamate 17, isoleucine 44, aspartate 46, aspartate 99, alanine 100, aspartate 101, arginine 128, arginine 215, and lysine 221. Residue aspartate 101 coordinates Mg(2+). Residue aspartate 101 participates in Mn(2+) binding.

This sequence belongs to the glycosyltransferase 2 family. It depends on Mg(2+) as a cofactor. Mn(2+) serves as cofactor. Ca(2+) is required as a cofactor.

The protein localises to the endoplasmic reticulum. The catalysed reaction is a di-trans,poly-cis-dolichyl phosphate + GDP-alpha-D-mannose = a di-trans,poly-cis-dolichyl beta-D-mannosyl phosphate + GDP. It functions in the pathway protein modification; protein glycosylation. Transfers mannose from GDP-mannose to dolichol monophosphate to form dolichol phosphate mannose (Dol-P-Man) which is the mannosyl donor in pathways leading to N-glycosylation, glycosyl phosphatidylinositol membrane anchoring, and O-mannosylation of proteins. In Drosophila melanogaster (Fruit fly), this protein is Dolichol-phosphate mannosyltransferase subunit 1.